The sequence spans 296 residues: 4-diphosphocytidyl-2-C-methyl-D-erythritol kinase (296 aa).

The active site involves Lys11. Residue 96–106 (PVSSGLAGGSA) participates in ATP binding. The active site involves Asp136.

It belongs to the GHMP kinase family. IspE subfamily.

The catalysed reaction is 4-CDP-2-C-methyl-D-erythritol + ATP = 4-CDP-2-C-methyl-D-erythritol 2-phosphate + ADP + H(+). Its pathway is isoprenoid biosynthesis; isopentenyl diphosphate biosynthesis via DXP pathway; isopentenyl diphosphate from 1-deoxy-D-xylulose 5-phosphate: step 3/6. Functionally, catalyzes the phosphorylation of the position 2 hydroxy group of 4-diphosphocytidyl-2C-methyl-D-erythritol. This chain is 4-diphosphocytidyl-2-C-methyl-D-erythritol kinase, found in Anaplasma phagocytophilum (strain HZ).